Here is a 381-residue protein sequence, read N- to C-terminus: Alkanesulfonate monooxygenase (381 aa).

This sequence belongs to the SsuD family. As to quaternary structure, homotetramer.

The catalysed reaction is an alkanesulfonate + FMNH2 + O2 = an aldehyde + FMN + sulfite + H2O + 2 H(+). Functionally, catalyzes the desulfonation of aliphatic sulfonates. The chain is Alkanesulfonate monooxygenase from Escherichia coli O9:H4 (strain HS).